The sequence spans 262 residues: MESNLQGTFLLNNTQLAQFSEMKAPMCQYSVQNSFYKLSPPGLGPQLAAGTPHGITDILSRPVATPNSSLLSGYPHVAGFGGLSSQGVYYGPQVGSFSKAGNEYPTRTRNCWADTGQDWRGSARPCSNTPDPLSDTIHKKKHTRPTFTGHQIFALEKTFEQTKYLAGPERARLAYSLGMTESQVKVWFQNRRTKWRKKSALEPSSSTPRAPGGASGDRAASENEDDEYNKPLDPDSDDEKIRLLLRKHRAAFSVLSLGAHSV.

The segment at residues 140 to 199 (KKHTRPTFTGHQIFALEKTFEQTKYLAGPERARLAYSLGMTESQVKVWFQNRRTKWRKKS) is a DNA-binding region (homeobox). The tract at residues 197-237 (KKSALEPSSSTPRAPGGASGDRAASENEDDEYNKPLDPDSD) is disordered.

As to expression, expressed in the developing CNS and gastro-intestinal tract.

Its subcellular location is the nucleus. Putative transcription factor, which may be involved in patterning of central nervous system and pancreas. This chain is Homeobox protein Nkx-6.3 (Nkx6-3), found in Mus musculus (Mouse).